The following is a 321-amino-acid chain: Putative membrane-bound redox modulator Alx (321 aa).

Topologically, residues 1–6 (MNTVGT) are periplasmic. Residues 7–27 (PLLWGGFAVVVAIMLAIDLLL) form a helical membrane-spanning segment. The Cytoplasmic segment spans residues 28–43 (QGRRGAHAMTMKQAAA). Residues 44 to 64 (WSLVWVTLSLLFNAAFWWYLV) form a helical membrane-spanning segment. Residues 65 to 89 (QTEGRAVADPQALAFLTGYLIEKSL) are Periplasmic-facing. The chain crosses the membrane as a helical span at residues 90–110 (AVDNVFVWLMLFSYFSVPAAL). Residues 111–113 (QRR) are Cytoplasmic-facing. Residues 114-134 (VLVYGVLGAIVLRTIMIFTGS) traverse the membrane as a helical segment. Tryptophan 135 is a topological domain (periplasmic). Residues 136 to 156 (LISQFDWILYIFGAFLLFTGV) traverse the membrane as a helical segment. Residues 157–198 (KMALAHEDESGIGDKPLVRWLRGHLRMTDTIDNEHFFVRKNG) lie on the Cytoplasmic side of the membrane. A helical transmembrane segment spans residues 199–219 (LLYATPLMLVLILVELSDVIF). The Periplasmic portion of the chain corresponds to 220–225 (AVDSIP). Residues 226–246 (AIFAVTTDPFIVLTSNLFAIL) form a helical membrane-spanning segment. Residues 247-261 (GLRAMYFLLAGVAER) are Cytoplasmic-facing. The chain crosses the membrane as a helical span at residues 262–282 (FSMLKYGLAVILVFIGIKMLI). Residues 283–286 (VDFY) are Periplasmic-facing. Residues 287–307 (HIPIAVSLGVVFGILVMTFII) traverse the membrane as a helical segment. The Cytoplasmic portion of the chain corresponds to 308–321 (NAWVNYRHDKQRVG).

It belongs to the TerC family.

The protein localises to the cell inner membrane. Its function is as follows. Has been proposed to be a redox modulator. In Escherichia coli O157:H7, this protein is Putative membrane-bound redox modulator Alx (alx).